Here is an 859-residue protein sequence, read N- to C-terminus: Leucine--tRNA ligase (859 aa).

Residues 42-52 carry the 'HIGH' region motif; that stretch reads PYPSGKLHVGH. The 'KMSKS' region motif lies at 611–615; the sequence is KMSKS. An ATP-binding site is contributed by K614.

It belongs to the class-I aminoacyl-tRNA synthetase family.

It localises to the cytoplasm. The catalysed reaction is tRNA(Leu) + L-leucine + ATP = L-leucyl-tRNA(Leu) + AMP + diphosphate. This Fusobacterium nucleatum subsp. nucleatum (strain ATCC 25586 / DSM 15643 / BCRC 10681 / CIP 101130 / JCM 8532 / KCTC 2640 / LMG 13131 / VPI 4355) protein is Leucine--tRNA ligase.